A 193-amino-acid polypeptide reads, in one-letter code: MAEKSIVQEAKDIQLAMELISLGARLQMLESETQLSRGRLIKLYKELRGSPPPKGMLPFSTDWFMTWEQNIHSSMFYNAYSFLIKNGQCSGVKAVIKSYRLYLEQCAPQSDSPLLALTRAWTLVRFVDSGMLQLSSCNCCKGMFIYPRLHQPKNSFVCSLCQPPSRAVKRLKLSQNLADIIPRLLDEQVKHAV.

The Zn(2+) site is built by cysteine 137, cysteine 140, cysteine 158, and cysteine 161.

Belongs to the FlhC family. Heterohexamer composed of two FlhC and four FlhD subunits. Each FlhC binds a FlhD dimer, forming a heterotrimer, and a hexamer assembles by dimerization of two heterotrimers. It depends on Zn(2+) as a cofactor.

The protein localises to the cytoplasm. Its function is as follows. Functions in complex with FlhD as a master transcriptional regulator that regulates transcription of several flagellar and non-flagellar operons by binding to their promoter region. Activates expression of class 2 flagellar genes, including fliA, which is a flagellum-specific sigma factor that turns on the class 3 genes. Also regulates genes whose products function in a variety of physiological pathways. The chain is Flagellar transcriptional regulator FlhC from Pectobacterium carotovorum (Erwinia carotovora).